A 661-amino-acid polypeptide reads, in one-letter code: DNA-directed RNA polymerase subunit beta' (661 aa).

Residues Cys69, Cys71, Cys87, and Cys90 each contribute to the Zn(2+) site. Residues Asp489, Asp491, and Asp493 each coordinate Mg(2+).

The protein belongs to the RNA polymerase beta' chain family. RpoC1 subfamily. In terms of assembly, in plastids the minimal PEP RNA polymerase catalytic core is composed of four subunits: alpha, beta, beta', and beta''. When a (nuclear-encoded) sigma factor is associated with the core the holoenzyme is formed, which can initiate transcription. Mg(2+) is required as a cofactor. The cofactor is Zn(2+).

It localises to the plastid. The protein resides in the chloroplast. It carries out the reaction RNA(n) + a ribonucleoside 5'-triphosphate = RNA(n+1) + diphosphate. Functionally, DNA-dependent RNA polymerase catalyzes the transcription of DNA into RNA using the four ribonucleoside triphosphates as substrates. This is DNA-directed RNA polymerase subunit beta' from Chaetosphaeridium globosum (Charophycean green alga).